The chain runs to 153 residues: Ribosome maturation factor RimP (153 aa).

Belongs to the RimP family.

The protein localises to the cytoplasm. In terms of biological role, required for maturation of 30S ribosomal subunits. This chain is Ribosome maturation factor RimP, found in Rippkaea orientalis (strain PCC 8801 / RF-1) (Cyanothece sp. (strain PCC 8801)).